The chain runs to 246 residues: Homeobox protein Hox-B4a (246 aa).

Positions 23 to 125 (YSQSDYLPSH…SQNTSTVSSR (103 aa)) are disordered. Composition is skewed to polar residues over residues 39-48 (AQRQDPSFQH) and 112-123 (QTPTSQNTSTVS). The Antp-type hexapeptide signature appears at 130–135 (VYPWMK). The homeobox DNA-binding region spans 151–210 (PKRSRTAYTRQQVLELEKEFHYNRYLTRRRRVEIAHTLCLSERQIKIWFQNRRMKWKKDH). The segment at 210-246 (HKLPNTKIRSNSASTNSSGCPTLCSNQSRASGPPPSL) is disordered. The segment covering 216–239 (KIRSNSASTNSSGCPTLCSNQSRA) has biased composition (polar residues).

It belongs to the Antp homeobox family. Deformed subfamily.

The protein localises to the nucleus. In terms of biological role, sequence-specific transcription factor which is part of a developmental regulatory system that provides cells with specific positional identities on the anterior-posterior axis. This is Homeobox protein Hox-B4a (hoxb4a) from Danio rerio (Zebrafish).